Reading from the N-terminus, the 188-residue chain is Large ribosomal subunit protein uL10 (188 aa).

The protein belongs to the universal ribosomal protein uL10 family. As to quaternary structure, part of the ribosomal stalk of the 50S ribosomal subunit. The N-terminus interacts with L11 and the large rRNA to form the base of the stalk. The C-terminus forms an elongated spine to which L12 dimers bind in a sequential fashion forming a multimeric L10(L12)X complex.

Functionally, forms part of the ribosomal stalk, playing a central role in the interaction of the ribosome with GTP-bound translation factors. This chain is Large ribosomal subunit protein uL10, found in Crocosphaera subtropica (strain ATCC 51142 / BH68) (Cyanothece sp. (strain ATCC 51142)).